The following is a 432-amino-acid chain: Adenylosuccinate synthetase (432 aa).

GTP-binding positions include 13–19 (GDEGKGK) and 41–43 (GHT). The active-site Proton acceptor is aspartate 14. Mg(2+)-binding residues include aspartate 14 and glycine 41. IMP is bound by residues 14-17 (DEGK), 39-42 (NAGH), threonine 130, arginine 144, glutamine 225, threonine 240, and arginine 304. Residue histidine 42 is the Proton donor of the active site. A substrate-binding site is contributed by 300-306 (ATTGRKR). Residues arginine 306, 332 to 334 (KLD), and 414 to 416 (STG) each bind GTP.

The protein belongs to the adenylosuccinate synthetase family. Homodimer. The cofactor is Mg(2+).

Its subcellular location is the cytoplasm. The catalysed reaction is IMP + L-aspartate + GTP = N(6)-(1,2-dicarboxyethyl)-AMP + GDP + phosphate + 2 H(+). It functions in the pathway purine metabolism; AMP biosynthesis via de novo pathway; AMP from IMP: step 1/2. Plays an important role in the de novo pathway of purine nucleotide biosynthesis. Catalyzes the first committed step in the biosynthesis of AMP from IMP. The chain is Adenylosuccinate synthetase from Alkalilimnicola ehrlichii (strain ATCC BAA-1101 / DSM 17681 / MLHE-1).